Here is a 622-residue protein sequence, read N- to C-terminus: Transcription factor SKN7 (622 aa).

A compositionally biased stretch (polar residues) spans 1 to 12 (MSFSTINSNVNK). A disordered region spans residues 1–29 (MSFSTINSNVNKTTGDSNNNTTENSSTAD). A compositionally biased stretch (low complexity) spans 13-27 (TTGDSNNNTTENSST). The DNA-binding domain stretch occupies residues 84-190 (ANEFVRKLFR…GLDNIKRKIP (107 aa)). Positions 212-303 (TNPNNPSGSL…NNFNTLCSTL (92 aa)) are hydrophobic repeat HR-A/B. Positions 240–260 (FGNLRRRVDKLQKELDMSKME) form a coiled coil. The region spanning 378–492 (HVLLVEDDAV…DLHSILIRYL (115 aa)) is the Response regulatory domain. The residue at position 427 (aspartate 427) is a 4-aspartylphosphate. Disordered stretches follow at residues 501–579 (QQLP…QHHN) and 599–622 (TVPH…NQLS). Residues 512–527 (THSNTNTANSNPNTIN) are compositionally biased toward low complexity. Residues 537 to 554 (DNPSTTTPVTPGASISSA) are compositionally biased toward polar residues. Over residues 555–578 (QHVQQGQQEQQHQIFHAQQQQQHH) the composition is skewed to low complexity. The span at 600-622 (VPHSSMGSTPQLPQSTLQENQLS) shows a compositional bias: polar residues.

It belongs to the SKN7 family. In terms of assembly, homotrimer. In terms of processing, the phosphorelay mechanism involves the sequential transfer of a phosphate group from 'His-576' (H1) to 'Asp-1144' (D1) of SLN1, then to 'His-64' (H2) of YPD1 and finally to Asp-427 (D2) of SKN7.

It localises to the nucleus. Functionally, transcription factor that is part of a SLN1-YPD1-SKN7 two-component regulatory system, which controls gene expression in response to changes in the osmolarity of the extracellular environment. Under low osmotic conditions, phosphorylated and activated by the phosphorelay intermediate protein YPD1. Also activated in response to oxidative stress, independent on the two-component regulatory system. Regulates heat shock genes in response to oxidative stress and genes involved in cell wall integrity in response to osmotic changes. The protein is Transcription factor SKN7 (SKN7) of Saccharomyces cerevisiae (strain ATCC 204508 / S288c) (Baker's yeast).